The chain runs to 83 residues: MKTSMFLTLTGLVLLFVVCYASESEEKEFPKELLSSIFAADSDFKEEERGCFGYKCDYYKGCCSGYVCSPTWKWCVRPGPGRR.

The first 21 residues, 1–21 (MKTSMFLTLTGLVLLFVVCYA), serve as a signal peptide directing secretion. The propeptide occupies 22 to 49 (SESEEKEFPKELLSSIFAADSDFKEEER). Intrachain disulfides connect cysteine 51–cysteine 63, cysteine 56–cysteine 68, and cysteine 62–cysteine 75.

The protein belongs to the neurotoxin 10 (Hwtx-1) family. 51 (Hntx-8) subfamily. Hntx-8 sub-subfamily. Expressed by the venom gland.

It localises to the secreted. In terms of biological role, weakly inhibits 5HT3A receptors and Kv1.3/KCNA3 voltage-gated potassium channels. Agglutinates erythrocytes. In Cyriopagopus schmidti (Chinese bird spider), this protein is U5-theraphotoxin-Hs1b 1.